Reading from the N-terminus, the 204-residue chain is FMN-dependent NADH:quinone oxidoreductase (204 aa).

Residues Ser-10 and 15 to 17 contribute to the FMN site; that span reads SLS.

This sequence belongs to the azoreductase type 1 family. Homodimer. FMN is required as a cofactor.

It catalyses the reaction 2 a quinone + NADH + H(+) = 2 a 1,4-benzosemiquinone + NAD(+). It carries out the reaction N,N-dimethyl-1,4-phenylenediamine + anthranilate + 2 NAD(+) = 2-(4-dimethylaminophenyl)diazenylbenzoate + 2 NADH + 2 H(+). In terms of biological role, quinone reductase that provides resistance to thiol-specific stress caused by electrophilic quinones. Its function is as follows. Also exhibits azoreductase activity. Catalyzes the reductive cleavage of the azo bond in aromatic azo compounds to the corresponding amines. The polypeptide is FMN-dependent NADH:quinone oxidoreductase (Rhizobium johnstonii (strain DSM 114642 / LMG 32736 / 3841) (Rhizobium leguminosarum bv. viciae)).